Consider the following 157-residue polypeptide: Ribosome-binding factor A (157 aa).

Positions 127-157 (QQQFGSEDASVEDEVLGDDVADDADETEGKD) are disordered. A compositionally biased stretch (acidic residues) spans 135–157 (ASVEDEVLGDDVADDADETEGKD).

This sequence belongs to the RbfA family. Monomer. Binds 30S ribosomal subunits, but not 50S ribosomal subunits or 70S ribosomes.

Its subcellular location is the cytoplasm. Its function is as follows. One of several proteins that assist in the late maturation steps of the functional core of the 30S ribosomal subunit. Associates with free 30S ribosomal subunits (but not with 30S subunits that are part of 70S ribosomes or polysomes). Required for efficient processing of 16S rRNA. May interact with the 5'-terminal helix region of 16S rRNA. The sequence is that of Ribosome-binding factor A from Shewanella baltica (strain OS155 / ATCC BAA-1091).